A 51-amino-acid chain; its full sequence is Lantibiotic streptococcin A-FF22 (51 aa).

The propeptide occupies 1–25 (MEKNNEVINSIQEVSLEELDQIIGA). 2 cross-links (beta-methyllanthionine (Thr-Cys)) span residues 33–38 (TISHEC) and 42–50 (TWAFLATCC). A cross-link (lanthionine (Ser-Cys)) is located at residues 35–49 (SHECHLNTWAFLATC). Residue Thr-48 is modified to 2,3-didehydrobutyrine.

The protein belongs to the type A lantibiotic family. Post-translationally, maturation of lantibiotics involves the enzymatic conversion of Thr, and Ser into dehydrated AA and the formation of thioether bonds with cysteine. This is followed by membrane translocation and cleavage of the modified precursor.

The protein localises to the secreted. It is found in the cell surface. Its function is as follows. Lanthionine-containing peptide antibiotic (lantibiotic) active on certain Gram-positive bacteria. The bactericidal activity of lantibiotics is based on depolarization of energized bacterial cytoplasmic membranes, initiated by the formation of aqueous transmembrane pores. This Streptococcus pyogenes protein is Lantibiotic streptococcin A-FF22 (scnA).